The sequence spans 135 residues: MSKQPATNKKPVKAKKKAFQNVPSGIAHVKATFNNTIIAITDPSGRVISWASAGKVNFSGSRKSSAFAATVAAQDAAKTASSLGMKEVEVNLKGPGAGRESAVRGLQSAGLTITAIRDTTPVPHNGCRPRKRRRV.

This sequence belongs to the universal ribosomal protein uS11 family. As to quaternary structure, part of the 30S ribosomal subunit. Interacts with proteins S7 and S18. Binds to IF-3.

Located on the platform of the 30S subunit, it bridges several disparate RNA helices of the 16S rRNA. Forms part of the Shine-Dalgarno cleft in the 70S ribosome. This Protochlamydia amoebophila (strain UWE25) protein is Small ribosomal subunit protein uS11.